Reading from the N-terminus, the 799-residue chain is Putative mRNA-capping enzyme P5 (799 aa).

This sequence belongs to the phytoreovirus protein P5 family.

It localises to the virion. It is found in the host cytoplasm. It carries out the reaction a 5'-end diphospho-ribonucleoside in mRNA + GTP + H(+) = a 5'-end (5'-triphosphoguanosine)-ribonucleoside in mRNA + diphosphate. It participates in mRNA processing; mRNA capping. In terms of biological role, enzyme involved in mRNA capping (Potential). Binds to GTP and might have guanylyltransferase activity. Together with the RNA-directed RNA polymerase P1 and protein P7, forms an transcriptional complex positioned near the channels situated at each of the five-fold vertices of the core. This Nephotettix cincticeps (Green rice leafhopper) protein is Putative mRNA-capping enzyme P5.